The following is a 1069-amino-acid chain: RE1-silencing transcription factor (1069 aa).

The segment at 32–121 (DLHDLSKAEL…SLELSVVEPQ (90 aa)) is interaction with SIN3A. An interaction with SIN3B region spans residues 43 to 57 (APQLIMLANVALTGE). Positions 85-104 (SDSEGEGLEESAELKGDPSG) are disordered. The tract at residues 144-417 (PVAEDKCKNL…KSKHPTCPSK (274 aa)) is interaction with ZFP90. Residues 158–180 (FRCKPCQYEAESEEQFVHHIRVH) form a C2H2-type 1 zinc finger. A required for binding to the neuron-restrictive silencer element region spans residues 200–211 (SGASPSEEGEFS). C2H2-type zinc fingers lie at residues 215 to 237 (IRCD…LKHH), 247 to 269 (YKCI…LRNH), 275 to 297 (YTCS…VRTH), 303 to 325 (YKCE…MRTH), 331 to 354 (FKCD…RQVH), 360 to 382 (LNCP…VELH), and 388 to 411 (FNCP…KSKH). Disordered stretches follow at residues 425–737 (KLKK…MELP) and 830–1022 (KASK…GKEG). Basic and acidic residues predominate over residues 451-482 (EQAKTKGVDASARRSERPVKGVGKDVPKEKKP). Over residues 484–493 (SNASVVQVTT) the composition is skewed to polar residues. 2 stretches are compositionally biased toward basic and acidic residues: residues 498–511 (SAVE…KHTD) and 554–576 (ESKP…KADK). A compositionally biased stretch (basic residues) spans 584–600 (KGGKKTALKTKTAKKGS). Residues 630-643 (AVVTPSGSTQTELS) show a composition bias toward polar residues. 2 stretches are compositionally biased toward pro residues: residues 679 to 706 (PSPP…PCPM) and 713 to 734 (PSPP…PLPM). 2 stretches are compositionally biased toward basic and acidic residues: residues 851–860 (RREETPKDQE) and 876–886 (GGTEEAGESRA). Low complexity predominate over residues 894–904 (STSALSSEQSS). Over residues 930–943 (TEQKTDRVPLKDSA) the composition is skewed to basic and acidic residues. The residue at position 948 (S948) is a Phosphoserine. The span at 957–968 (EAAAPAVVASPP) shows a compositional bias: low complexity. The interaction with RCOR1 stretch occupies residues 981 to 1059 (EGIHSHDGSD…HLNRHLVNVY (79 aa)). A C2H2-type 9 zinc finger spans residues 1032 to 1054 (FVCIFCDRSFRKEKDYSKHLNRH).

Isoform 1 and isoform 6 form heterodimers. Isoform 6: Forms homodimers and homooligomers; binds to the neuron-restrictive silencer element (NRSE) as monomer. Interacts with SIN3A, SIN3B and RCOR1. Interacts with CDYL. Interacts with EHMT1 and EHMT2 only in the presence of CDYL. Part of a complex containing at least CDYL, REST, WIZ, SETB1, EHMT1 and EHMT2. Interacts (via zinc-finger DNA-binding domain) with ZFP90 (via N- and C-termini); the interaction inhibits REST repressor activity. Interacts (via C2H2-type zinc finger 5) with PRICKLE1. Interacts with FBXW11 and BTRC. Interacts with USP7. In terms of processing, O-glycosylated. Phosphorylated; phosphorylation is required for ubiquitination. Post-translationally, ubiquitinated; ubiquitination is mediated by BTRC and leads to proteasomal degradation in G2 phase. Ubiquitination increases during neuronal differentiation. Deubiquitinated by USP7; leading to its stabilization and promoting the maintenance of neural progenitor cells. As to expression, expressed in the hippocampus including the granule cell layer of the dentate gyrus, the pyramidal cell layers of CA1 and CA3, the apical and basilar dendrite layers of the stratum radiatum and stratum oriens of CA1, the stratum lucidum and stratum oriens of CA3 and in astroglia (at protein level). Expressed in the brain, with the highest levels in the neurons of hippocampus, pons/medulla and midbrain.

It localises to the nucleus. It is found in the cytoplasm. In terms of biological role, transcriptional repressor which binds neuron-restrictive silencer element (NRSE) and represses neuronal gene transcription in non-neuronal cells. Restricts the expression of neuronal genes by associating with two distinct corepressors, SIN3A and RCOR1, which in turn recruit histone deacetylase to the promoters of REST-regulated genes. Mediates repression by recruiting the BHC complex at RE1/NRSE sites which acts by deacetylating and demethylating specific sites on histones, thereby acting as a chromatin modifier. Transcriptional repression by REST-CDYL via the recruitment of histone methyltransferase EHMT2 may be important in transformation suppression. Represses the expression of SRRM4 in non-neural cells to prevent the activation of neural-specific splicing events and to prevent production of REST isoform 6. Repressor activity may be inhibited by forming heterodimers with isoform 6, thereby preventing binding to NRSE or binding to corepressors and leading to derepression of target genes. Also maintains repression of neuronal genes in neural stem cells, and allows transcription and differentiation into neurons by dissociation from RE1/NRSE sites of target genes. Thereby is involved in maintaining the quiescent state of adult hippocampal neural stem cells and preventing premature differentiation into mature neurons. Plays a role in the developmental switch in synaptic NMDA receptor composition during postnatal development, by repressing GRIN2B expression and thereby altering NMDA receptor properties from containing primarily GRIN2B to primarily GRIN2A subunits. Acts as a regulator of osteoblast differentiation. Key repressor of gene expression in hypoxia; represses genes in hypoxia by direct binding to an RE1/NRSE site on their promoter regions. May also function in stress resistance in the brain during aging; possibly by regulating expression of genes involved in cell death and in the stress response. Repressor of gene expression in the hippocampus after ischemia by directly binding to RE1/NRSE sites and recruiting SIN3A and RCOR1 to promoters of target genes, thereby promoting changes in chromatin modifications and ischemia-induced cell death. After ischemia, might play a role in repression of miR-132 expression in hippocampal neurons, thereby leading to neuronal cell death. Functionally, binds to the 3' region of the neuron-restrictive silencer element (NRSE), with lower affinity than full-length REST isoform 1. Exhibits weaker repressor activity compared to isoform 1. May negatively regulate the repressor activity of isoform 1 by binding to isoform 1, thereby preventing its binding to NRSE and leading to derepression of target genes. However, in another study, does not appear to be implicated in repressor activity of a NRSE motif-containing reporter construct nor in inhibitory activity on the isoform 1 transcriptional repressor activity. Post-transcriptional inactivation of REST by SRRM4-dependent alternative splicing into isoform 6 is required in mechanosensory hair cells in the inner ear for derepression of neuronal genes and hearing. This chain is RE1-silencing transcription factor (Rest), found in Rattus norvegicus (Rat).